Consider the following 219-residue polypeptide: Glutathione S-transferase-like protein LUC7 (219 aa).

The GST N-terminal domain maps to 3 to 84 (PFGRLYSFMP…YLAQSGPYSE (82 aa)). The GST C-terminal domain occupies 90-219 (DAATSAKIRQ…NLIDVKRVHE (130 aa)).

The protein belongs to the GST superfamily.

In terms of biological role, glutathione S-transferase-like protein; part of the gene cluster that mediates the biosynthesis of the mycotoxin lucilactaene and the lucilactaene-related compound NG-391 that act as cell cycle inhibitors with potent growth inhibitory activity against malarial parasites, moderate growth inhibitory activity against cancer cells, and no activity against bacteria and fungi. Within the cluster, LUC7 and LUC8 encode proteins which are not commonly involved in the biosynthesis of secondary metabolites and are not essential for lucilactaene biosynthesis. This is Glutathione S-transferase-like protein LUC7 from Fusarium sp.